The chain runs to 247 residues: Pyridoxine 5'-phosphate synthase (247 aa).

Asparagine 7 lines the 3-amino-2-oxopropyl phosphate pocket. Residue 9–10 (DH) participates in 1-deoxy-D-xylulose 5-phosphate binding. Arginine 18 serves as a coordination point for 3-amino-2-oxopropyl phosphate. The Proton acceptor role is filled by histidine 43. 2 residues coordinate 1-deoxy-D-xylulose 5-phosphate: arginine 45 and histidine 50. Residue glutamate 70 is the Proton acceptor of the active site. Threonine 100 contacts 1-deoxy-D-xylulose 5-phosphate. Histidine 190 acts as the Proton donor in catalysis. Residues glycine 191 and 212 to 213 (GH) each bind 3-amino-2-oxopropyl phosphate.

The protein belongs to the PNP synthase family. In terms of assembly, homooctamer; tetramer of dimers.

It is found in the cytoplasm. It carries out the reaction 3-amino-2-oxopropyl phosphate + 1-deoxy-D-xylulose 5-phosphate = pyridoxine 5'-phosphate + phosphate + 2 H2O + H(+). It participates in cofactor biosynthesis; pyridoxine 5'-phosphate biosynthesis; pyridoxine 5'-phosphate from D-erythrose 4-phosphate: step 5/5. Its function is as follows. Catalyzes the complicated ring closure reaction between the two acyclic compounds 1-deoxy-D-xylulose-5-phosphate (DXP) and 3-amino-2-oxopropyl phosphate (1-amino-acetone-3-phosphate or AAP) to form pyridoxine 5'-phosphate (PNP) and inorganic phosphate. This Synechococcus sp. (strain WH7803) protein is Pyridoxine 5'-phosphate synthase.